The primary structure comprises 226 residues: UPF0758 protein SE_1336 (226 aa).

Residues 102–224 enclose the MPN domain; sequence QITHPSDVAS…FTSLVEAGYF (123 aa). Residues His-173, His-175, and Asp-186 each coordinate Zn(2+). The JAMM motif signature appears at 173–186; it reads HNHPSGDVTPSKED.

This sequence belongs to the UPF0758 family.

The chain is UPF0758 protein SE_1336 from Staphylococcus epidermidis (strain ATCC 12228 / FDA PCI 1200).